The chain runs to 186 residues: Ribosome-recycling factor (186 aa).

The segment at 144-163 (EKDGVIGQDESRAQSERVQK) is disordered.

This sequence belongs to the RRF family.

The protein resides in the cytoplasm. Responsible for the release of ribosomes from messenger RNA at the termination of protein biosynthesis. May increase the efficiency of translation by recycling ribosomes from one round of translation to another. The sequence is that of Ribosome-recycling factor from Rhizobium johnstonii (strain DSM 114642 / LMG 32736 / 3841) (Rhizobium leguminosarum bv. viciae).